The chain runs to 66 residues: Cold shock-like protein CspLB (66 aa).

In terms of domain architecture, CSD spans 4–63 (GTVKWFNSEKGFGFIEVEGGDDVFVHFSAIEGEGFKTLDEGQSVEFEIVEGQRGPQAEKV).

In terms of assembly, homodimer.

It localises to the cytoplasm. The chain is Cold shock-like protein CspLB (cspLB) from Listeria monocytogenes serovar 1/2a (strain ATCC BAA-679 / EGD-e).